Consider the following 152-residue polypeptide: Vasotocin-neurophysin VT 1 (152 aa).

Positions 1-19 are cleaved as a signal peptide; that stretch reads MSDSFLPTCILCLLALSSA. Cysteine 20 and cysteine 25 are joined by a disulfide. Glycine 28 is modified (glycine amide). Cystine bridges form between cysteine 40/cysteine 84, cysteine 43/cysteine 57, cysteine 51/cysteine 74, cysteine 58/cysteine 64, cysteine 91/cysteine 103, cysteine 97/cysteine 115, and cysteine 104/cysteine 109.

Belongs to the vasopressin/oxytocin family.

It is found in the secreted. Functionally, vasotocin is an antidiuretic hormone. The protein is Vasotocin-neurophysin VT 1 of Catostomus commersonii (White sucker).